Here is a 355-residue protein sequence, read N- to C-terminus: Ataxin-3 (355 aa).

Met1 participates in a covalent cross-link: Peptide (Met-Gly) (interchain with G-Cter in ubiquitin). The Josephin domain occupies 1–180; that stretch reads MESIFHEKQE…DCEADQLLQM (180 aa). Cys14 (nucleophile) is an active-site residue. Catalysis depends on His119, which acts as the Proton acceptor. Asn134 is a catalytic residue. Lys200 is covalently cross-linked (Glycyl lysine isopeptide (Lys-Gly) (interchain with G-Cter in ubiquitin)). 2 UIM domains span residues 224-243 and 244-263; these read DDED…IDME and DEEA…SSRG. The tract at residues 257–333 is disordered; sequence MQGSSRGMCE…AGNAMSEEDV (77 aa). A phosphoserine mark is found at Ser268, Ser272, and Ser273. The segment covering 279-301 has biased composition (basic and acidic residues); the sequence is EELRKRREAYFEKQQHQQQEADR. A compositionally biased stretch (polar residues) spans 312 to 326; the sequence is PTTSSGGLRSNQAGN. Phosphoserine is present on Ser321. In terms of domain architecture, UIM 3 spans 329 to 348; the sequence is SEEDVLRATVTVSLETAKDS.

As to quaternary structure, interacts with STUB1/CHIP (when monoubiquitinated). Interacts with DNA repair proteins RAD23A and RAD23B. Interacts with BECN1 (via its poly-Gln domain). Interacts with PRKN, UBR2, VCP and tubulin. In terms of processing, monoubiquitinated by UBE2W, possibly leading to activate the deubiquitinating enzyme activity. Ubiquitously expressed.

Its subcellular location is the nucleus matrix. It localises to the nucleus. The protein localises to the lysosome membrane. It catalyses the reaction Thiol-dependent hydrolysis of ester, thioester, amide, peptide and isopeptide bonds formed by the C-terminal Gly of ubiquitin (a 76-residue protein attached to proteins as an intracellular targeting signal).. Deubiquitinating enzyme involved in protein homeostasis maintenance, transcription, cytoskeleton regulation, myogenesis and degradation of misfolded chaperone substrates. Binds long polyubiquitin chains and trims them, while it has weak or no activity against chains of 4 or less ubiquitins. Involved in degradation of misfolded chaperone substrates via its interaction with STUB1/CHIP: recruited to monoubiquitinated STUB1/CHIP, and restricts the length of ubiquitin chain attached to STUB1/CHIP substrates and preventing further chain extension. Interacts with key regulators of transcription and represses transcription: acts as a histone-binding protein that regulates transcription. Acts as a negative regulator of mTORC1 signaling in response to amino acid deprivation by mediating deubiquitination of RHEB, thereby promoting RHEB inactivation by the TSC-TBC complex. Regulates autophagy via the deubiquitination of 'Lys-402' of BECN1 leading to the stabilization of BECN1. The polypeptide is Ataxin-3 (Atxn3) (Rattus norvegicus (Rat)).